The sequence spans 128 residues: LIM domain-containing protein 2 (128 aa).

An N-acetylmethionine modification is found at M1. The segment at 1–25 (MFQAAGAAQATPSHEAKGSSGSSTV) is disordered. In terms of domain architecture, LIM zinc-binding spans 39 to 99 (ETCAACQKTV…RPHFQQLFKS (61 aa)). Positions 41, 44, 62, 65, 68, 71, 89, and 92 each coordinate Zn(2+).

As to quaternary structure, interacts with ILK.

It localises to the cytoplasm. The protein localises to the nucleus. Its function is as follows. Acts as an activator of the protein-kinase ILK, thereby regulating cell motility. The sequence is that of LIM domain-containing protein 2 from Mus musculus (Mouse).